The sequence spans 122 residues: Large ribosomal subunit protein uL18 (122 aa).

It belongs to the universal ribosomal protein uL18 family. As to quaternary structure, part of the 50S ribosomal subunit; part of the 5S rRNA/L5/L18/L25 subcomplex. Contacts the 5S and 23S rRNAs.

Functionally, this is one of the proteins that bind and probably mediate the attachment of the 5S RNA into the large ribosomal subunit, where it forms part of the central protuberance. This Ruminiclostridium cellulolyticum (strain ATCC 35319 / DSM 5812 / JCM 6584 / H10) (Clostridium cellulolyticum) protein is Large ribosomal subunit protein uL18.